The chain runs to 214 residues: External core antigen (214 aa).

An N-terminal signal peptide occupies residues 1-19 (MQLFHLCLIISCTCPTLQA). The HBEAG stretch occupies residues 25–27 (GWL). Residues 164–214 (PNAPILSTLPETTVVRRRDRGRSPRRRTPSPRRRRSQSPRRRRSQSRESQC) form a disordered region. The span at 178 to 207 (VRRRDRGRSPRRRTPSPRRRRSQSPRRRRS) shows a compositional bias: basic residues. Residues 186–192 (SPRRRTP) form a 1; half-length repeat. The 3 X 8 AA repeats of S-P-R-R-R-R-S-Q stretch occupies residues 186–208 (SPRRRTPSPRRRRSQSPRRRRSQ). The propeptide occupies 186–214 (SPRRRTPSPRRRRSQSPRRRRSQSRESQC). Tandem repeats lie at residues 193–200 (SPRRRRSQ) and 201–208 (SPRRRRSQ).

It belongs to the orthohepadnavirus precore antigen family. Homodimerizes. Phosphorylated. Post-translationally, cleaved by host furin.

The protein resides in the secreted. The protein localises to the host nucleus. Its function is as follows. May regulate immune response to the intracellular capsid in acting as a T-cell tolerogen, by having an immunoregulatory effect which prevents destruction of infected cells by cytotoxic T-cells. This immune regulation may predispose to chronicity during perinatal infections and prevent severe liver injury during adult infections. The chain is External core antigen from Homo sapiens (Human).